The following is a 29-amino-acid chain: Prolamin alpha-1 (29 aa).

The protein is Prolamin alpha-1 of Dactylis glomerata (Orchard grass).